The chain runs to 585 residues: MTTSATEKALEDRAKSLHKKEKKASAKAAAAAGASASTSLEGSPSPASPAKKDKKDKKDKKDKKRSADDADADDDEKAAKKRRKEEKKAKKAAAKSGAATSLESTPAASPAPAASSSASAASFTPTNPAAARAFVESHNITIEAPEESNERPPLPMVDFRELDGKVDAAVKKTLDSQGFSTPTPIQACCWPVLLQNKDVVGIAETGSGKTFAFGLPALQHLVTKHKVLDSGKKKAKGAQVNVLVIAPTRELAIQTEENMAKLGKSMGIGMICLYGGVSKQEQVRLLNQSPPVRIVVGTPGRVLDMARDGSLDLSGVTYLVLDEADRMLDKGFEPDIRAIIGMCKSREEGRHTSMFSATWPPAVRGLAESFMNGPVRVTVGSDELSANRRVEQTVEVLADGYAKERRLNDFLRSVNAQRSKDKILIFALYKKEAQRIEQTLRRGGFKVSGIHGDLGQNERIASLERFKSAETPLLVATDVAARGLDIPNVEHVVNYTFPLTIEDYVHRIGRTGRGGKTGKSLTFFTEMDKAHAGELIRVLKDADQKVPDALTKFPTTIKKKTHSSYGDHFKELVPGKAKKITFDDD.

A disordered region spans residues 1 to 124; sequence MTTSATEKAL…SSSASAASFT (124 aa). The segment covering 26 to 43 has biased composition (low complexity); the sequence is AKAAAAAGASASTSLEGS. 2 stretches are compositionally biased toward basic residues: residues 52–64 and 79–93; these read KDKK…KDKK and AKKR…KKAA. A compositionally biased stretch (low complexity) spans 94–124; it reads AKSGAATSLESTPAASPAPAASSSASAASFT. Positions 159-187 match the Q motif motif; that stretch reads FRELDGKVDAAVKKTLDSQGFSTPTPIQA. The region spanning 190–377 is the Helicase ATP-binding domain; that stretch reads WPVLLQNKDV…ESFMNGPVRV (188 aa). An ATP-binding site is contributed by 203-210; sequence AETGSGKT. A DEAD box motif is present at residues 322-325; sequence DEAD. One can recognise a Helicase C-terminal domain in the interval 406–554; the sequence is RLNDFLRSVN…KVPDALTKFP (149 aa).

The protein belongs to the DEAD box helicase family. DDX5/DBP2 subfamily.

It localises to the nucleus. Its subcellular location is the nucleolus. It catalyses the reaction ATP + H2O = ADP + phosphate + H(+). Functionally, ATP-dependent RNA helicase required for 60S ribosomal subunit synthesis. Involved in efficient pre-rRNA processing, predominantly at site A3, which is necessary for the normal formation of 25S and 5.8S rRNAs. In Mycosarcoma maydis (Corn smut fungus), this protein is ATP-dependent RNA helicase DBP3 (DBP3).